Reading from the N-terminus, the 388-residue chain is Zinc finger protein 1 (388 aa).

A compositionally biased stretch (polar residues) spans 1-19 (MSSIPNINWNDPNNGKSNT). Disordered regions lie at residues 1–120 (MSSI…QQPL), 157–219 (LQQR…QQWD), and 236–311 (SSIQ…KPIT). Low complexity predominate over residues 20 to 38 (SRQSQPQPQLPSNVSPPNS). Composition is skewed to polar residues over residues 52–67 (YGSS…NPNT) and 88–97 (YPVQQTAQQR). 2 stretches are compositionally biased toward low complexity: residues 102 to 120 (LQQV…QQPL) and 157 to 172 (LQQR…KSQL). Residues 173 to 203 (NEQNAMMSASTQQYPVQDFTNPYPNAQNPAE) are compositionally biased toward polar residues. Low complexity-rich tracts occupy residues 204-217 (QQQQ…QSQQ) and 236-259 (SSIQ…KQQQ). Residues 268-278 (KKKPGRKPKLR) are compositionally biased toward basic residues. Over residues 282-294 (ESSSETPQVPKTA) the composition is skewed to polar residues. A DNA-binding region (zn(2)-C6 fungal-type) is located at residues 318–345 (CLTCRQRKKRCCETRPRCTECTRLRLNC). The tract at residues 348-367 (PKPGTEHKNKPKDQKDDENT) is disordered. Over residues 351–367 (GTEHKNKPKDQKDDENT) the composition is skewed to basic and acidic residues.

Its subcellular location is the nucleus. Its function is as follows. Perhaps a regulatory role. May be involved in transcriptional activation. The polypeptide is Zinc finger protein 1 (CZF1) (Candida albicans (strain WO-1) (Yeast)).